Reading from the N-terminus, the 198-residue chain is Transcription factor FapR (198 aa).

One can recognise a MaoC-like domain in the interval Asn-102–Val-169.

This sequence belongs to the FapR family.

Transcriptional factor involved in regulation of membrane lipid biosynthesis by repressing genes involved in fatty acid and phospholipid metabolism. The sequence is that of Transcription factor FapR from Geobacillus sp. (strain WCH70).